Reading from the N-terminus, the 4652-residue chain is Low-density lipoprotein receptor-related protein 2 (4652 aa).

Residues 1-25 (MERWAAAAACTLLLAFAACLAPASG) form the signal peptide. Residues 26–4422 (RECLGNEFRC…SKGISPGTTV (4397 aa)) are Extracellular-facing. 7 consecutive LDL-receptor class A domains span residues 27–63 (ECLGNEFRCSNGHCITESWRCDGTRDCLDGSDEIGCP), 66–104 (TCGSTQFHCENEDVCIPLYWVCDGEEDCSNGADEHQRCP), 108–144 (TCSSHHFTCTNGECIPVEYRCDHSTDCLDGTDEINCR), 142–181 (NCRYPVCQQQTCHNGACYNTSQRCDGEIDCRDASDELNCT), 183–219 (RCLRNEFQCGSGECIPRDYVCDHDPDCSDSSDEHSCS), 223–259 (PCKGNEFACSNGFCINQNWVCDGMADCLDNSDEDGCE), and 267–308 (ECYP…RVCD). 21 cysteine pairs are disulfide-bonded: cysteine 28–cysteine 40, cysteine 35–cysteine 53, cysteine 47–cysteine 62, cysteine 67–cysteine 80, cysteine 74–cysteine 93, cysteine 87–cysteine 103, cysteine 109–cysteine 121, cysteine 116–cysteine 134, cysteine 128–cysteine 143, cysteine 143–cysteine 158, cysteine 153–cysteine 171, cysteine 165–cysteine 180, cysteine 184–cysteine 196, cysteine 191–cysteine 209, cysteine 203–cysteine 218, cysteine 224–cysteine 236, cysteine 231–cysteine 249, cysteine 243–cysteine 258, cysteine 268–cysteine 281, cysteine 275–cysteine 294, and cysteine 288–cysteine 307. Residues asparagine 160 and asparagine 179 are each glycosylated (N-linked (GlcNAc...) asparagine). N-linked (GlcNAc...) asparagine glycosylation is present at asparagine 341. The EGF-like 1; calcium-binding domain occupies 348 to 386 (DFNDCQIWGICDHFCEDRIGHHQCFCAEGYVLEHEQHCR). 3 disulfides stabilise this stretch: cysteine 352–cysteine 362, cysteine 358–cysteine 371, and cysteine 373–cysteine 385. Residue asparagine 388 is glycosylated (N-linked (GlcNAc...) asparagine). 8 LDL-receptor class B repeats span residues 436 to 478 (SKVF…DWIN), 479 to 521 (NKLY…DPTV), 522 to 568 (GYLF…DLVA), 569 to 613 (KRVY…FEDN), 753 to 795 (NAIF…DWIS), 796 to 837 (RNLY…HPIA), 838 to 881 (GYIF…DWGS), and 882 to 925 (SRLY…FGEY). N-linked (GlcNAc...) asparagine glycosylation occurs at asparagine 771. Residue asparagine 866 is glycosylated (N-linked (GlcNAc...) asparagine). Asparagine 1015 carries an N-linked (GlcNAc...) asparagine glycan. The LDL-receptor class A 8 domain maps to 1025 to 1061 (QCGALSFPCNNGRCVPLHYRCDGVDDCHDNSDEVQCG). 3 disulfide bridges follow: cysteine 1026–cysteine 1038, cysteine 1033–cysteine 1051, and cysteine 1045–cysteine 1060. A glycan (N-linked (GlcNAc...) asparagine) is linked at asparagine 1064. 7 LDL-receptor class A domains span residues 1066 to 1104 (SCAPSAFACGHGGGECIPSYWRCDNHNDCVDGSDEQNCS), 1110 to 1146 (SCRADYFTCDNHMCIPKNWLCDTDNDCGDGSDEKRCD), 1150 to 1186 (TCSPTQFHCPNHRCIDLAFVCDGDKDCADGSDESACV), 1188 to 1225 (NCTDSQFKCVGSNKCISNTYRCDGVSDCSDHSDEIDCP), 1231 to 1269 (MCRQDEFQCREDGICIPDSWECDGHPDCLTGSDEHSGCP), 1272 to 1308 (TCPXSRFLCANGNCIFRDWLCDGDNDCRDMSDEKDCP), and 1313 to 1351 (LCPSWQWQCPGHSICVNLSSVCDGISDCPHGTDESPLCN). 9 disulfide bridges follow: cysteine 1067-cysteine 1081, cysteine 1074-cysteine 1094, cysteine 1088-cysteine 1103, cysteine 1111-cysteine 1123, cysteine 1118-cysteine 1136, cysteine 1130-cysteine 1145, cysteine 1151-cysteine 1163, cysteine 1158-cysteine 1176, and cysteine 1170-cysteine 1185. An N-linked (GlcNAc...) asparagine glycan is attached at asparagine 1102. 6 residues coordinate Ca(2+): tryptophan 1128, aspartate 1131, aspartate 1133, aspartate 1135, aspartate 1141, and glutamate 1142. Asparagine 1188 carries N-linked (GlcNAc...) asparagine glycosylation. Cystine bridges form between cysteine 1189–cysteine 1202, cysteine 1196–cysteine 1215, cysteine 1209–cysteine 1224, cysteine 1232–cysteine 1245, cysteine 1239–cysteine 1258, cysteine 1252–cysteine 1268, cysteine 1273–cysteine 1285, cysteine 1280–cysteine 1298, cysteine 1292–cysteine 1307, cysteine 1314–cysteine 1327, cysteine 1321–cysteine 1340, and cysteine 1334–cysteine 1350. Residues tyrosine 1207, aspartate 1210, valine 1212, aspartate 1214, aspartate 1220, and glutamate 1221 each coordinate Ca(2+). Residue asparagine 1329 is glycosylated (N-linked (GlcNAc...) asparagine). 4 N-linked (GlcNAc...) asparagine glycosylation sites follow: asparagine 1385, asparagine 1452, asparagine 1498, and asparagine 1552. LDL-receptor class B repeat units lie at residues 1480–1522 (GRIF…DWVG), 1523–1565 (RNLY…DPRV), 1568–1611 (RVIF…DYPT), 1612–1654 (RLLY…TIFE), 1655–1696 (DSIY…VHPA), 1789–1831 (QFLY…DWLS), 1832–1881 (RNLY…DPAK), 1882–1929 (GKLY…DIQE), 1930–1971 (QKLY…YGPY), and 1972–2012 (LYYA…YRRR). Asparagine 1677 and asparagine 1809 each carry an N-linked (GlcNAc...) asparagine glycan. The N-linked (GlcNAc...) asparagine glycan is linked to asparagine 2053. LDL-receptor class B repeat units follow at residues 2105-2154 (GFVY…DWVA), 2155-2199 (GNLY…DPKN), 2200-2243 (RYLF…DHNS), 2244-2287 (GYIY…FGNS), 2429-2475 (NRIY…DWIG), 2476-2516 (RRIY…DPCQ), 2517-2560 (GYMY…DYKE), 2561-2602 (NLLY…YGQY), and 2603-2644 (IYWT…VVNN). Residues asparagine 2175 and asparagine 2222 are each glycosylated (N-linked (GlcNAc...) asparagine). N-linked (GlcNAc...) asparagine glycosylation is present at asparagine 2485. LDL-receptor class A domains lie at 2696 to 2734 (RCNSTQFTCLSGYCILESLKCNDIDECGDSSDELETLCA), 2737 to 2773 (TCPPTSFTCANGRCIQRHFRCDHYNDCGDNSDESGCR), 2776 to 2815 (SCNITTEFSCNNGKCLPLQLVCDGIDHCNDNNTSDEKNCA), 2818 to 2857 (TCLPDYIKCANSNVCIPRLFLCDGDNDCGDMSDENPIYCV), 2860 to 2897 (TCKNNEFQCTSGSCIPELWHCDGERDCDDGSDEPATCV), 2902 to 2941 (TCSSDEFKCDNNRCIQMEWICDGDNDCGDMSDEDGRHHCE), 2944 to 2986 (NCSS…QNCT), 2989 to 3025 (NCSGTEFRCSNGLCIPNWFRCDRRNDCGDYSDERNCK), 3028 to 3066 (ACDENLFTCQNGICTYKSYICDGENDCGDNSDELEHLCH), and 3071 to 3107 (TCPPHQFRCNNGNCIEMVKVCNHQADCSDNSDEERCG). 18 disulfides stabilise this stretch: cysteine 2697-cysteine 2709, cysteine 2704-cysteine 2722, cysteine 2716-cysteine 2733, cysteine 2738-cysteine 2750, cysteine 2745-cysteine 2763, cysteine 2757-cysteine 2772, cysteine 2777-cysteine 2790, cysteine 2785-cysteine 2803, cysteine 2797-cysteine 2814, cysteine 2819-cysteine 2832, cysteine 2826-cysteine 2845, cysteine 2839-cysteine 2856, cysteine 2861-cysteine 2873, cysteine 2868-cysteine 2886, cysteine 2880-cysteine 2896, cysteine 2903-cysteine 2915, cysteine 2910-cysteine 2928, and cysteine 2922-cysteine 2940. N-linked (GlcNAc...) asparagine glycosylation occurs at asparagine 2698. Asparagine 2778 carries an N-linked (GlcNAc...) asparagine glycan. 2 N-linked (GlcNAc...) asparagine glycosylation sites follow: asparagine 2806 and asparagine 2807. The N-linked (GlcNAc...) asparagine glycan is linked to asparagine 2944. 3 disulfide bridges follow: cysteine 2945–cysteine 2962, cysteine 2952–cysteine 2975, and cysteine 2969–cysteine 2985. Asparagine 2984 and asparagine 2989 each carry an N-linked (GlcNAc...) asparagine glycan. 9 disulfide bridges follow: cysteine 2990–cysteine 3002, cysteine 2997–cysteine 3015, cysteine 3009–cysteine 3024, cysteine 3029–cysteine 3041, cysteine 3036–cysteine 3054, cysteine 3048–cysteine 3065, cysteine 3072–cysteine 3084, cysteine 3079–cysteine 3097, and cysteine 3091–cysteine 3106. Asparagine 3122 carries an N-linked (GlcNAc...) asparagine glycan. An EGF-like 2; calcium-binding domain is found at 3149–3189 (DIDECKETPSVCSQKCENLLGSYICKCAPGYTREPDGRSCR). Disulfide bonds link cysteine 3153–cysteine 3164, cysteine 3160–cysteine 3173, and cysteine 3175–cysteine 3188. 4 N-linked (GlcNAc...) asparagine glycosylation sites follow: asparagine 3208, asparagine 3254, asparagine 3312, and asparagine 3352. LDL-receptor class B repeat units lie at residues 3236 to 3278 (ERLY…DWVT), 3279 to 3321 (RKLY…DKPR), 3330 to 3373 (GYVY…DYTN), 3374 to 3417 (DLLY…FEDT), and 3418 to 3458 (IYWT…YHPY). Residues asparagine 3435 and asparagine 3444 are each glycosylated (N-linked (GlcNAc...) asparagine). 9 consecutive LDL-receptor class A domains span residues 3509–3547 (MCSSTQFLCANNEMCIPIWWKCDGQKDCLDGSDEPNTCP), 3550–3588 (FCRLGQFQCSDGNCTSSNFICNARQDCPDGSDEDAVLCE), 3591–3629 (RCESNQWQCANKRCIPESWQCDSLNDCGDNSDEDSSHCA), 3632–3670 (TCLPGYFKCANGHCIPQSWKCDVDNDCGDYSDEPLQECM), 3675–3713 (RCDNYTEFDCKTNYRCIPKWAVCNGFDDCRDNSDEQNCE), 3716–3753 (TCKPSGEFRCTNHHCIPLRWRCDGHNDCGDNSDEENCV), 3756–3792 (QCSESEFRCDDQTCIPSRWICDQNNDCGDNSDERDCE), 3795–3831 (TCHPGYFQCSSGHCIPDQMRCDGFADCLDASDEATCP), and 3839–3877 (YCPATLFECKNHVCVQPSWKCDGDNDCGDGSDEELHLCL). 27 disulfides stabilise this stretch: cysteine 3510-cysteine 3523, cysteine 3517-cysteine 3536, cysteine 3530-cysteine 3546, cysteine 3551-cysteine 3563, cysteine 3558-cysteine 3576, cysteine 3570-cysteine 3587, cysteine 3592-cysteine 3604, cysteine 3599-cysteine 3617, cysteine 3611-cysteine 3628, cysteine 3633-cysteine 3645, cysteine 3640-cysteine 3658, cysteine 3652-cysteine 3669, cysteine 3676-cysteine 3690, cysteine 3684-cysteine 3703, cysteine 3697-cysteine 3712, cysteine 3717-cysteine 3730, cysteine 3725-cysteine 3743, cysteine 3737-cysteine 3752, cysteine 3757-cysteine 3769, cysteine 3764-cysteine 3782, cysteine 3776-cysteine 3791, cysteine 3796-cysteine 3808, cysteine 3803-cysteine 3821, cysteine 3815-cysteine 3830, cysteine 3840-cysteine 3852, cysteine 3847-cysteine 3865, and cysteine 3859-cysteine 3876. N-linked (GlcNAc...) asparagine glycosylation occurs at asparagine 3562. An N-linked (GlcNAc...) asparagine glycan is attached at asparagine 3678. Residue asparagine 3878 is glycosylated (N-linked (GlcNAc...) asparagine). LDL-receptor class A domains follow at residues 3880–3919 (TCDLTNRFRCDNNRCIYRHELCNHEDDCGDGSDEKKENCL) and 3925–3961 (PCTEGEFKCSNGHCISQHLVCDDVDDCGDHFDETGCN). 12 cysteine pairs are disulfide-bonded: cysteine 3881/cysteine 3894, cysteine 3889/cysteine 3907, cysteine 3901/cysteine 3918, cysteine 3926/cysteine 3938, cysteine 3933/cysteine 3951, cysteine 3945/cysteine 3960, cysteine 3968/cysteine 3977, cysteine 3973/cysteine 3987, cysteine 3989/cysteine 4003, cysteine 4009/cysteine 4019, cysteine 4015/cysteine 4028, and cysteine 4030/cysteine 4045. One can recognise an EGF-like 3 domain in the interval 3964 to 4004 (EERSCAENLCEHNCTQLIGGGFICSCRPGFKASSLNRNSCE). N-linked (GlcNAc...) asparagine glycosylation occurs at asparagine 3976. The EGF-like 4; calcium-binding domain maps to 4005–4046 (DINECEQFGVCPQNCHNTKGSYECTCAEGFRSMSEHYGERCA). Residue asparagine 4066 is glycosylated (N-linked (GlcNAc...) asparagine). LDL-receptor class B repeat units lie at residues 4152-4194 (RHIY…NPKQ), 4195-4238 (GLMY…DYVN), and 4240-4281 (DRIY…FESQ). Asparagine 4325 is a glycosylation site (N-linked (GlcNAc...) asparagine). The 35-residue stretch at 4375-4409 (MPPPCRCMNEGNCYFDKNNLPKCKCPSGYMGEYCE) folds into the EGF-like 5 domain. Cystine bridges form between cysteine 4379–cysteine 4387, cysteine 4381–cysteine 4397, and cysteine 4399–cysteine 4408. The helical transmembrane segment at 4423 to 4443 (AVLVTLILIIIIGGLVALGFF) threads the bilayer. At 4444 to 4652 (HYRKTGSILI…ANLVREDSEA (209 aa)) the chain is on the cytoplasmic side. The short motif at 4450-4459 (SILISMPRLP) is the SH3-binding element. Residues 4453-4458 (ISMPRL) carry the PxLPxI/L motif 1; mediates interaction with ANKRA2 motif. The PxLPxI/L motif 2; mediates interaction with ANKRA2 motif lies at 4456-4461 (PRLPSL). Position 4460 is a phosphoserine (serine 4460). An Endocytosis signal motif is present at residues 4518–4523 (FENPMY). Over residues 4536–4553 (TTTQVSESGNVYNKNYGS) the composition is skewed to polar residues. A disordered region spans residues 4536 to 4652 (TTTQVSESGN…ANLVREDSEA (117 aa)). Residue serine 4568 is modified to Phosphoserine. The segment at 4588 to 4601 (QNTNFENPIYAETE) is interaction with DAB2. Positions 4594–4597 (NPIY) match the NPXY motif motif. The SH2-binding motif lies at 4597 to 4600 (YAET). The SH3-binding signature appears at 4610 to 4621 (VTPPPSPSPPAK). Phosphoserine is present on serine 4615. Polar residues predominate over residues 4626-4636 (KGTTPAYSATE). Threonine 4629 bears the Phosphothreonine mark. At serine 4650 the chain carries Phosphoserine.

It belongs to the LDLR family. As to quaternary structure, binds plasminogen, extracellular matrix components, plasminogen activator-plasminogen activator inhibitor type I complex, apolipoprotein E-enriched beta-VLDL, lipoprotein lipase, lactoferrin, CLU/clusterin and calcium. Forms a multimeric complex together with LRPAP1. Interacts (via PxLPxI/L motif) with ANKRA2 (via ankyrin repeats). Interacts with LRP2BP. Interacts (via NPXY motif) with DAB2; the interaction is not affected by tyrosine phosphorylation of the NPXY motif. Interacts with MB. Interacts with BMP4. Interacts with the Sonic hedgehog protein N-product which is the active product of SHH. Interacts with CST3 in a calcium-dependent manner. Interacts with the vitamin-D binding protein GC/DBP. Interacts with sex hormone-binding protein SHBG. Interacts with angiotensin-2. Also interacts with angiotensin 1-7. Interacts with APOM. Interacts with selenoprotein SEPP1. Interacts with LEP. Interacts with ALB. Interacts with the antiapoptotic protein BIRC5/survivin. Interacts with matrix metalloproteinase MMP2 in complex with metalloproteinase inhibitor TIMP1. In neurons, forms a trimeric complex with APP and APPB1/FE65. Interacts with LDLRAP1/ARH; mediates trafficking of LRP2 to the endocytic recycling compartment. Does not interact with beta-amyloid protein 40 alone but interacts with the complex composed of beta-amyloid protein 40 and CLU/APOJ. Interacts with MDK. In terms of processing, a fraction undergoes proteolytic cleavage of the extracellular domain at the cell membrane to generate a cytoplasmic tail fragment. This is internalized into the early endosome from where it trafficks in an LDLRAP1/ARH-dependent manner to the endocytic recycling compartment (ERC). In the ERC, it is further cleaved by gamma-secretase to release a fragment which translocates to the nucleus and mediates transcriptional repression. Post-translationally, N-glycosylation is required for ligand binding.

It is found in the apical cell membrane. It localises to the endosome lumen. The protein resides in the membrane. Its subcellular location is the clathrin-coated pit. The protein localises to the cell projection. It is found in the dendrite. It localises to the axon. In terms of biological role, multiligand endocytic receptor. Acts together with CUBN to mediate endocytosis of high-density lipoproteins. Mediates receptor-mediated uptake of polybasic drugs such as aprotinin, aminoglycosides and polymyxin B. In the kidney, mediates the tubular uptake and clearance of leptin. Also mediates transport of leptin across the blood-brain barrier through endocytosis at the choroid plexus epithelium. Endocytosis of leptin in neuronal cells is required for hypothalamic leptin signaling and leptin-mediated regulation of feeding and body weight. Mediates endocytosis and subsequent lysosomal degradation of CST3 in kidney proximal tubule cells. Mediates renal uptake of 25-hydroxyvitamin D3 in complex with the vitamin D3 transporter GC/DBP. Mediates renal uptake of metallothionein-bound heavy metals. Together with CUBN, mediates renal reabsorption of myoglobin. Mediates renal uptake and subsequent lysosomal degradation of APOM. Plays a role in kidney selenium homeostasis by mediating renal endocytosis of selenoprotein SEPP1. Mediates renal uptake of the antiapoptotic protein BIRC5/survivin which may be important for functional integrity of the kidney. Mediates renal uptake of matrix metalloproteinase MMP2 in complex with metalloproteinase inhibitor TIMP1. Mediates endocytosis of Sonic hedgehog protein N-product (ShhN), the active product of SHH. Also mediates ShhN transcytosis. In the embryonic neuroepithelium, mediates endocytic uptake and degradation of BMP4, is required for correct SHH localization in the ventral neural tube and plays a role in patterning of the ventral telencephalon. Required at the onset of neurulation to sequester SHH on the apical surface of neuroepithelial cells of the rostral diencephalon ventral midline and to control PTCH1-dependent uptake and intracellular trafficking of SHH. During neurulation, required in neuroepithelial cells for uptake of folate bound to the folate receptor FOLR1 which is necessary for neural tube closure. In the adult brain, negatively regulates BMP signaling in the subependymal zone which enables neurogenesis to proceed. In astrocytes, mediates endocytosis of ALB which is required for the synthesis of the neurotrophic factor oleic acid. Involved in neurite branching. During optic nerve development, required for SHH-mediated migration and proliferation of oligodendrocyte precursor cells. Mediates endocytic uptake and clearance of SHH in the retinal margin which protects retinal progenitor cells from mitogenic stimuli and keeps them quiescent. Plays a role in reproductive organ development by mediating uptake in reproductive tissues of androgen and estrogen bound to the sex hormone binding protein SHBG. Mediates endocytosis of angiotensin-2. Also mediates endocytosis of angiotensis 1-7. Binds to the complex composed of beta-amyloid protein 40 and CLU/APOJ and mediates its endocytosis and lysosomal degradation. Required for embryonic heart development. Required for normal hearing, possibly through interaction with estrogen in the inner ear. In Sus scrofa (Pig), this protein is Low-density lipoprotein receptor-related protein 2.